Here is a 797-residue protein sequence, read N- to C-terminus: MKKLLIASLLFGTTTTVFAAPFVAKDIRVDGVQGDLEQQIRASLPVRAGQRVTDNDVANIVRSLFVSGRFDDVKAHQEGDVLVVSVVAKSIISDVKIKGNSVIPTEALKQNLDANGFKVGDVLIREKLNEFAKSVKEHYASVGRYNATVEPIVNTLPNNRAEILIQINEDDKAKLASLTFKGNESVSSSTLQEQMELQPDSWWKLWGNKFEGAQFEKDLQSIRDYYLNNGYAKAQITKTDVQLNDEKTKVNVTIDVNEGLQYDLRSARIIGNLGGMSAELEPLLSALHLNDTFRRSDIADVENAIKAKLGERGYGSATVNSVPDFDDANKTLAITLVVDAGRRLTVRQLRFEGNTVSADSTLRQEMRQQEGTWYNSQLVELGKIRLDRTGFFETVENRIDPINGSNDEVDVVYKVKERNTGSINFGIGYGTESGISYQASVKQDNFLGTGAAVSIAGTKNDYGTSVNLGYTEPYFTKDGVSLGGNVFFENYDNSKSDTSSNYKRTTYGSNVTLGFPVNENNSYYVGLGHTYNKISNFALEYNRNLYIQSMKFKGNGIKTNDFDFSFGWNYNSLNRGYFPTKGVKASLGGRVTIPGSDNKYYKLSADVQGFYPLDRDHLWVVSAKASAGYANGFGNKRLPFYQTYTAGGIGSLRGFAYGSIGPNAIYAEYGNGSGTGTFKKISSDVIGGNAIATASAELIVPTPFVSDKSQNTVRTSLFVDAASVWNTKWKSDKNGLESDVLKRLPDYGKSSRIRASTGVGFQWQSPIGPLVFSYAKPIKKYENDDVEQFQFSIGGSF.

The first 19 residues, methionine 1–alanine 19, serve as a signal peptide directing secretion. POTRA domains lie at phenylalanine 22 to lysine 89, serine 90 to aspartate 170, alanine 173 to glycine 259, tyrosine 262 to glycine 341, and leucine 344 to arginine 418.

Belongs to the BamA family. Part of the Bam complex.

Its subcellular location is the cell outer membrane. Part of the outer membrane protein assembly complex, which is involved in assembly and insertion of beta-barrel proteins into the outer membrane. The chain is Outer membrane protein assembly factor BamA from Haemophilus influenzae.